A 149-amino-acid polypeptide reads, in one-letter code: Macrodomain Ter protein (149 aa).

This sequence belongs to the MatP family. As to quaternary structure, homodimer.

The protein resides in the cytoplasm. Functionally, required for spatial organization of the terminus region of the chromosome (Ter macrodomain) during the cell cycle. Prevents early segregation of duplicated Ter macrodomains during cell division. Binds specifically to matS, which is a 13 bp signature motif repeated within the Ter macrodomain. This chain is Macrodomain Ter protein, found in Vibrio cholerae serotype O1 (strain ATCC 39315 / El Tor Inaba N16961).